An 88-amino-acid chain; its full sequence is UPF0297 protein BPUM_2379 (88 aa).

It belongs to the UPF0297 family.

This chain is UPF0297 protein BPUM_2379, found in Bacillus pumilus (strain SAFR-032).